The sequence spans 390 residues: Transforming growth factor beta-1 proprotein (390 aa).

A signal peptide spans 1 to 29; the sequence is MPPSGLRLLPLLLPLLWLLVLTPSRPAAG. The tract at residues 30 to 74 is straightjacket domain; that stretch reads LSTCKTIDMELVKRKRIETIRGQILSKLRLASPPSQGEVPPGPLP. The arm domain stretch occupies residues 75–271; the sequence is EAVLALYNST…ATPLERAQHL (197 aa). N-linked (GlcNAc...) asparagine glycosylation is found at asparagine 82, asparagine 136, and asparagine 176. The interval 226–252 is bowtie tail; sequence DSKDNTLQVDINGFTTGRRGDLATIHG. Positions 244-246 match the Cell attachment site motif; it reads RGD. 4 disulfides stabilise this stretch: cysteine 285–cysteine 294, cysteine 293–cysteine 356, cysteine 322–cysteine 387, and cysteine 326–cysteine 389.

This sequence belongs to the TGF-beta family. Homodimer; disulfide-linked. Interacts with the serine proteases, HTRA1 and HTRA3: the interaction with either inhibits TGFB1-mediated signaling and the HTRA protease activity is required for this inhibition. May interact with THSD4; this interaction may lead to sequestration by FBN1 microfibril assembly and attenuation of TGFB signaling. Interacts with CD109, DPT and ASPN. Interacts with EFEMP2. Interacts with TSKU; the interaction contributes to regulation of the hair cycle. Interacts with TGFBR3. In terms of assembly, homodimer; disulfide-linked. Interacts with transforming growth factor beta-1 (TGF-beta-1) chain; interaction is non-covalent and maintains TGF-beta-1 in a latent state; each latency-associated peptide (LAP) monomer interacts with TGF-beta-1 in the other monomer. Interacts with LTBP1; leading to regulation of TGF-beta-1 activation. Interacts with LRRC32/GARP; leading to regulation of TGF-beta-1 activation on the surface of activated regulatory T-cells (Tregs). Interacts with LRRC33/NRROS; leading to regulation of TGF-beta-1 activation in macrophages and microglia. Interacts (via cell attachment site) with integrins ITGAV and ITGB6 (ITGAV:ITGB6), leading to release of the active TGF-beta-1. Interacts with NREP; the interaction results in a decrease in TGFB1 autoinduction. Interacts with HSP90AB1; inhibits latent TGFB1 activation. As to quaternary structure, homodimer; disulfide-linked. Interacts with TGF-beta receptors (TGFBR1 and TGFBR2), leading to signal transduction. Post-translationally, transforming growth factor beta-1 proprotein: The precursor proprotein is cleaved in the Golgi apparatus by FURIN to form Transforming growth factor beta-1 (TGF-beta-1) and Latency-associated peptide (LAP) chains, which remain non-covalently linked, rendering TGF-beta-1 inactive. N-glycosylated. Deglycosylation leads to activation of Transforming growth factor beta-1 (TGF-beta-1); mechanisms triggering deglycosylation-driven activation of TGF-beta-1 are however unclear.

It localises to the secreted. Its subcellular location is the extracellular space. It is found in the extracellular matrix. Functionally, transforming growth factor beta-1 proprotein: Precursor of the Latency-associated peptide (LAP) and Transforming growth factor beta-1 (TGF-beta-1) chains, which constitute the regulatory and active subunit of TGF-beta-1, respectively. Required to maintain the Transforming growth factor beta-1 (TGF-beta-1) chain in a latent state during storage in extracellular matrix. Associates non-covalently with TGF-beta-1 and regulates its activation via interaction with 'milieu molecules', such as LTBP1, LRRC32/GARP and LRRC33/NRROS, that control activation of TGF-beta-1. Interaction with LRRC33/NRROS regulates activation of TGF-beta-1 in macrophages and microglia. Interaction with LRRC32/GARP controls activation of TGF-beta-1 on the surface of activated regulatory T-cells (Tregs). Interaction with integrins (ITGAV:ITGB6 or ITGAV:ITGB8) results in distortion of the Latency-associated peptide chain and subsequent release of the active TGF-beta-1. Its function is as follows. Multifunctional protein that regulates the growth and differentiation of various cell types and is involved in various processes, such as normal development, immune function, microglia function and responses to neurodegeneration. Activation into mature form follows different steps: following cleavage of the proprotein in the Golgi apparatus, Latency-associated peptide (LAP) and Transforming growth factor beta-1 (TGF-beta-1) chains remain non-covalently linked rendering TGF-beta-1 inactive during storage in extracellular matrix. At the same time, LAP chain interacts with 'milieu molecules', such as LTBP1, LRRC32/GARP and LRRC33/NRROS that control activation of TGF-beta-1 and maintain it in a latent state during storage in extracellular milieus. TGF-beta-1 is released from LAP by integrins (ITGAV:ITGB6 or ITGAV:ITGB8): integrin-binding to LAP stabilizes an alternative conformation of the LAP bowtie tail and results in distortion of the LAP chain and subsequent release of the active TGF-beta-1. Once activated following release of LAP, TGF-beta-1 acts by binding to TGF-beta receptors (TGFBR1 and TGFBR2), which transduce signal. While expressed by many cells types, TGF-beta-1 only has a very localized range of action within cell environment thanks to fine regulation of its activation by Latency-associated peptide chain (LAP) and 'milieu molecules'. Plays an important role in bone remodeling: acts as a potent stimulator of osteoblastic bone formation, causing chemotaxis, proliferation and differentiation in committed osteoblasts. Can promote either T-helper 17 cells (Th17) or regulatory T-cells (Treg) lineage differentiation in a concentration-dependent manner. At high concentrations, leads to FOXP3-mediated suppression of RORC and down-regulation of IL-17 expression, favoring Treg cell development. At low concentrations in concert with IL-6 and IL-21, leads to expression of the IL-17 and IL-23 receptors, favoring differentiation to Th17 cells. Stimulates sustained production of collagen through the activation of CREB3L1 by regulated intramembrane proteolysis (RIP). Mediates SMAD2/3 activation by inducing its phosphorylation and subsequent translocation to the nucleus. Positively regulates odontoblastic differentiation in dental papilla cells, via promotion of IPO7-mediated translocation of phosphorylated SMAD2 to the nucleus and subsequent transcription of target genes. Can induce epithelial-to-mesenchymal transition (EMT) and cell migration in various cell types. This is Transforming growth factor beta-1 proprotein (TGFB1) from Chlorocebus aethiops (Green monkey).